A 511-amino-acid polypeptide reads, in one-letter code: Bifunctional purine biosynthesis protein PurH (511 aa).

One can recognise an MGS-like domain in the interval 1-145 (MKKRALVSVS…KNHKFVSVIV (145 aa)).

The protein belongs to the PurH family.

The enzyme catalyses (6R)-10-formyltetrahydrofolate + 5-amino-1-(5-phospho-beta-D-ribosyl)imidazole-4-carboxamide = 5-formamido-1-(5-phospho-D-ribosyl)imidazole-4-carboxamide + (6S)-5,6,7,8-tetrahydrofolate. It carries out the reaction IMP + H2O = 5-formamido-1-(5-phospho-D-ribosyl)imidazole-4-carboxamide. It functions in the pathway purine metabolism; IMP biosynthesis via de novo pathway; 5-formamido-1-(5-phospho-D-ribosyl)imidazole-4-carboxamide from 5-amino-1-(5-phospho-D-ribosyl)imidazole-4-carboxamide (10-formyl THF route): step 1/1. It participates in purine metabolism; IMP biosynthesis via de novo pathway; IMP from 5-formamido-1-(5-phospho-D-ribosyl)imidazole-4-carboxamide: step 1/1. This chain is Bifunctional purine biosynthesis protein PurH, found in Bacillus cytotoxicus (strain DSM 22905 / CIP 110041 / 391-98 / NVH 391-98).